Consider the following 363-residue polypeptide: Flagellar P-ring protein 2 (363 aa).

The signal sequence occupies residues 1–20 (MKRIVLLLMSVALFSTAAQA).

It belongs to the FlgI family. The basal body constitutes a major portion of the flagellar organelle and consists of four rings (L,P,S, and M) mounted on a central rod.

It is found in the periplasm. The protein localises to the bacterial flagellum basal body. In terms of biological role, assembles around the rod to form the L-ring and probably protects the motor/basal body from shearing forces during rotation. The chain is Flagellar P-ring protein 2 (flgI2) from Vibrio parahaemolyticus serotype O3:K6 (strain RIMD 2210633).